Reading from the N-terminus, the 424-residue chain is DUF21 domain-containing protein At4g33700 (424 aa).

The Extracellular segment spans residues methionine 1 to asparagine 11. A CNNM transmembrane domain is found at cysteine 8–glutamate 191. A helical membrane pass occupies residues phenylalanine 12–leucine 32. The Cytoplasmic portion of the chain corresponds to threonine 33 to histidine 70. A helical membrane pass occupies residues leucine 71–leucine 91. Residues aspartate 92–leucine 94 are Extracellular-facing. A helical transmembrane segment spans residues valine 95 to isoleucine 115. Topologically, residues proline 116–arginine 136 are cytoplasmic. The chain crosses the membrane as a helical span at residues valine 137–leucine 157. At glycine 158 to serine 424 the chain is on the extracellular side. A CBS 1 domain is found at methionine 210–valine 271. N-linked (GlcNAc...) asparagine glycosylation is found at asparagine 273 and asparagine 319. CBS domains lie at threonine 275–serine 331 and proline 355–glutamate 416. Disordered regions lie at residues serine 321 to arginine 340 and proline 355 to asparagine 374. Serine 331 bears the Phosphoserine mark.

The protein resides in the membrane. This Arabidopsis thaliana (Mouse-ear cress) protein is DUF21 domain-containing protein At4g33700 (CBSDUF6).